The following is a 67-amino-acid chain: uncharacterized protein (67 aa).

Residues 12-34 (YYYAHQTVCITSTGFALCFVVQA) form a helical membrane-spanning segment.

The protein resides in the membrane. This is an uncharacterized protein from Saccharomyces cerevisiae (strain ATCC 204508 / S288c) (Baker's yeast).